Here is a 368-residue protein sequence, read N- to C-terminus: Agmatine deiminase (368 aa).

Cys-357 serves as the catalytic Amidino-cysteine intermediate.

Belongs to the agmatine deiminase family. Homodimer.

The enzyme catalyses agmatine + H2O = N-carbamoylputrescine + NH4(+). It functions in the pathway amine and polyamine biosynthesis; putrescine biosynthesis via agmatine pathway; N-carbamoylputrescine from agmatine: step 1/1. Functionally, mediates the hydrolysis of agmatine into N-carbamoylputrescine in the arginine decarboxylase (ADC) pathway of putrescine biosynthesis, a basic polyamine. The polypeptide is Agmatine deiminase (Pseudomonas fluorescens (strain ATCC BAA-477 / NRRL B-23932 / Pf-5)).